The following is a 413-amino-acid chain: Clusterin-associated protein 1 (413 aa).

Residues 198–291 (KTKDLLNNVA…ERFEEAKNTL (94 aa)) are a coiled coil. The segment at 305-413 (LLKSGSNDDS…EPLDESDNDF (109 aa)) is disordered. Composition is skewed to acidic residues over residues 312–328 (DDSD…DSEL) and 360–388 (DSDD…EDES). A phosphoserine mark is found at Ser-314, Ser-324, and Ser-326. Position 409 is a phosphoserine (Ser-409).

It belongs to the CLUAP1 family. In terms of assembly, interacts with CLU/clusterin. Interacts with UBXN10; the interaction is direct. Expressed in testis, thyroid and trachea and to a lower extent in spinal cord and adrenal gland. Highly expressed in colon cancer and osteosarcoma cell lines.

Its subcellular location is the cell projection. It localises to the cilium. The protein resides in the nucleus. Required for cilia biogenesis. Appears to function within the multiple intraflagellar transport complex B (IFT-B). Key regulator of hedgehog signaling. In Homo sapiens (Human), this protein is Clusterin-associated protein 1 (CLUAP1).